Here is a 493-residue protein sequence, read N- to C-terminus: Galactose-1-phosphate uridylyltransferase (493 aa).

It belongs to the galactose-1-phosphate uridylyltransferase type 2 family.

It is found in the cytoplasm. It carries out the reaction alpha-D-galactose 1-phosphate + UDP-alpha-D-glucose = alpha-D-glucose 1-phosphate + UDP-alpha-D-galactose. The protein operates within carbohydrate metabolism; galactose metabolism. The chain is Galactose-1-phosphate uridylyltransferase from Streptococcus pneumoniae serotype 19F (strain G54).